The chain runs to 701 residues: MGRPSLALRLLLALLLLPPPAPLLWALRPAPCPEPCSCPPDGALRCPGPQAGLSRLSLTYLPIKVIPSQAFRGLNEVIKIEISQSDSLEKIEANAFDNLLNLSEILIQNTKNLVHIEAGAFTNLPRLKYLSICNTGIHKLPDVTKIFSSEFNFILEICDNLHITTIPRNAFQGMNNESITLKLYGNGFEEIQSHAFNGTTLISLELKENARLEKMHNDAFRGATGPSILDISSTKLQALPTYGLESIQTLIATSSYSLKKLPSREKFTNLLDATLTYPSHCCAFRNLPTNEQNFSFSIFKNFSKQCESTARRPNNETLYSAIFAESELSGWDYDYGFCLPKTLQCAPEPDAFNPCEDIMGYNFLRVLIWLINILAITGNVTVLFVLLTSRYKLTVPRFLMCNLSFADFCMGLYLLLIASVDAQTKGQYYNHAIDWQTGSGCSAAGFFTVFASELSVYTLTVITLERWHTITYAIQLDQKLRLKHAIPVMLGGWLFSTLIAVLPLVGVSNYMKVSICLPMDVESTLSQVYILTILILNVMAFIIICACYIKIYFAVQNPELMATNKDTKIAKKMAVLIFTDFTCMAPISFFAISAAFKVPLITVTNSKVLLVLFYPVNSCANPFLYAIFTKAFQRDFFLLLSKFGCCKYRAELYRRKDFSAYISNCKNGFTGSNKPSRSTFKLTTLQCQYSAVLDKTCYKEC.

Positions 1-26 (MGRPSLALRLLLALLLLPPPAPLLWA) are cleaved as a signal peptide. The Extracellular portion of the chain corresponds to 27 to 365 (LRPAPCPEPC…EDIMGYNFLR (339 aa)). An N-linked (GlcNAc...) asparagine glycan is attached at asparagine 101. LRR repeat units lie at residues 124–149 (LPRL…IFSS), 151–173 (FNFI…AFQG), 174–198 (MNNE…AFNG), 200–222 (TLIS…AFRG), 223–246 (ATGP…GLES), and 250–271 (LIAT…TNLL). 2 N-linked (GlcNAc...) asparagine glycosylation sites follow: asparagine 176 and asparagine 197. N-linked (GlcNAc...) asparagine glycans are attached at residues asparagine 293, asparagine 301, and asparagine 315. Tyrosine 333 is modified (sulfotyrosine). Residues 366–387 (VLIWLINILAITGNVTVLFVLL) form a helical membrane-spanning segment. At 388 to 397 (TSRYKLTVPR) the chain is on the cytoplasmic side. A helical membrane pass occupies residues 398 to 418 (FLMCNLSFADFCMGLYLLLIA). At 419–441 (SVDAQTKGQYYNHAIDWQTGSGC) the chain is on the extracellular side. A disulfide bridge links cysteine 441 with cysteine 516. The chain crosses the membrane as a helical span at residues 442–464 (SAAGFFTVFASELSVYTLTVITL). Over 465–484 (ERWHTITYAIQLDQKLRLKH) the chain is Cytoplasmic. A helical membrane pass occupies residues 485 to 507 (AIPVMLGGWLFSTLIAVLPLVGV). The Extracellular portion of the chain corresponds to 508–527 (SNYMKVSICLPMDVESTLSQ). Residues 528–551 (VYILTILILNVMAFIIICACYIKI) form a helical membrane-spanning segment. Topologically, residues 552 to 572 (YFAVQNPELMATNKDTKIAKK) are cytoplasmic. The helical transmembrane segment at 573–596 (MAVLIFTDFTCMAPISFFAISAAF) threads the bilayer. At 597–607 (KVPLITVTNSK) the chain is on the extracellular side. The helical transmembrane segment at 608–629 (VLLVLFYPVNSCANPFLYAIFT) threads the bilayer. The Cytoplasmic segment spans residues 630–701 (KAFQRDFFLL…VLDKTCYKEC (72 aa)). 2 S-palmitoyl cysteine lipidation sites follow: cysteine 645 and cysteine 646.

This sequence belongs to the G-protein coupled receptor 1 family. FSH/LSH/TSH subfamily. Sulfated.

It localises to the cell membrane. Its function is as follows. Receptor for lutropin-choriogonadotropic hormone. The activity of this receptor is mediated by G proteins which activate adenylate cyclase. In Bos taurus (Bovine), this protein is Lutropin-choriogonadotropic hormone receptor (LHCGR).